Reading from the N-terminus, the 485-residue chain is Endo-1,4-beta-xylanase C (485 aa).

Residues 1–19 (MKFLQIIPVLLSLTSTTLA) form the signal peptide. A GH11 domain is found at 34 to 234 (KETGNKVGTI…GNGGVSGTAD (201 aa)). N-linked (GlcNAc...) asparagine glycosylation is found at asparagine 56 and asparagine 107. Glutamate 128 acts as the Nucleophile in catalysis. Asparagine 175 carries an N-linked (GlcNAc...) asparagine glycan. Glutamate 221 serves as the catalytic Proton donor. Residues 250–450 (ASPAPAGGAP…PQNASDGGNC (201 aa)) form a disordered region. Composition is skewed to low complexity over residues 265–330 (AGND…QGQH) and 344–354 (GSDFNNWSQGG). 7 consecutive repeat copies span residues 275–280 (GQQPPQ), 281–286 (GQQPPQ), 287–292 (GQQPPQ), 293–298 (GQQPPQ), 299–304 (GQQPPQ), 310–315 (GQQPPQ), and 316–321 (GQQPPQ). The 7 X 6 AA tandem repeats of G-Q-Q-P-P-Q stretch occupies residues 275 to 321 (GQQPPQGQQPPQGQQPPQGQQPPQGQQPPQGNDQQGQQPPQGQQPPQ). An N-linked (GlcNAc...) asparagine glycan is attached at asparagine 349. 8 consecutive repeat copies span residues 353-361 (GGSPWGGNQ), 362-370 (GGSPWGGNQ), 371-379 (GGNPWGGNQ), 380-388 (GGSPWGGNQ), 389-397 (GGSPWGQGN), 399-407 (GGNPWGGNQ), 408-416 (GGSPWGGNQ), and 417-425 (GGNPWGGNQ). Residues 353 to 425 (GGSPWGGNQG…QGGNPWGGNQ (73 aa)) are 8 X 9 AA tandem repeats of G-G-[SN]-P-W-G-G-N-Q. The segment covering 355-425 (SPWGGNQGGS…QGGNPWGGNQ (71 aa)) has biased composition (gly residues). Residues 426–445 (WGAPQNAAAPQSAAAPQNAS) show a composition bias toward low complexity. Residue asparagine 443 is glycosylated (N-linked (GlcNAc...) asparagine). A CBM1 domain is found at 449–484 (NCASLWGQCGGQGYNGPSCCSEGSCKPINEYFHQCQ).

Belongs to the glycosyl hydrolase 11 (cellulase G) family.

The protein resides in the secreted. It carries out the reaction Endohydrolysis of (1-&gt;4)-beta-D-xylosidic linkages in xylans.. It functions in the pathway glycan degradation; xylan degradation. Endo-1,4-beta-xylanase involved in the hydrolysis of xylan, a major structural heterogeneous polysaccharide found in plant biomass representing the second most abundant polysaccharide in the biosphere, after cellulose. The chain is Endo-1,4-beta-xylanase C (xynC) from Neocallimastix patriciarum (Rumen fungus).